The primary structure comprises 449 residues: Dolichyl-diphosphooligosaccharide--protein glycosyltransferase 48 kDa subunit (449 aa).

The signal sequence occupies residues Met1–Ala18. The Lumenal portion of the chain corresponds to Val19–Tyr412. A helical transmembrane segment spans residues Tyr413–Phe433. Residues Lys434–Gln449 lie on the Cytoplasmic side of the membrane.

This sequence belongs to the DDOST 48 kDa subunit family. Component of the oligosaccharyltransferase (OST) complex.

The protein resides in the endoplasmic reticulum membrane. It participates in protein modification; protein glycosylation. In terms of biological role, subunit of the oligosaccharyl transferase (OST) complex that catalyzes the initial transfer of a defined glycan (Glc(3)Man(9)GlcNAc(2) in eukaryotes) from the lipid carrier dolichol-pyrophosphate to an asparagine residue within an Asn-X-Ser/Thr consensus motif in nascent polypeptide chains, the first step in protein N-glycosylation. N-glycosylation occurs cotranslationally and the complex associates with the Sec61 complex at the channel-forming translocon complex that mediates protein translocation across the endoplasmic reticulum (ER). All subunits are required for a maximal enzyme activity. Required for the assembly of both SST3A- and SS3B-containing OST complexes. In Drosophila melanogaster (Fruit fly), this protein is Dolichyl-diphosphooligosaccharide--protein glycosyltransferase 48 kDa subunit (Ost48).